Consider the following 217-residue polypeptide: Eukaryotic translation initiation factor 4E (217 aa).

Residues 1 to 30 are disordered; the sequence is MATVEPETTPTPNPPTTEEEKTESNQEVAN. N-acetylalanine is present on alanine 2. Threonine 22 carries the post-translational modification Phosphothreonine. Residues 37 to 40 are EIF4EBP1/2/3 binding; it reads HPLQ. Residue 56–57 coordinates mRNA; sequence WQ. The EIF4EBP1/2/3 binding stretch occupies residues 73–77; the sequence is WALYN. 102 to 103 is an mRNA binding site; it reads WE. Positions 132–139 are EIF4EBP1/2/3 binding; the sequence is ETLLCLIG. Residues 157–162 and 205–207 each bind mRNA; these read RAKGDK and TKS. Residue serine 209 is modified to Phosphoserine; by PKC and MKNK2.

This sequence belongs to the eukaryotic initiation factor 4E family. In terms of assembly, eIF4F is a multi-subunit complex, the composition of which varies with external and internal environmental conditions. It is composed of at least EIF4A, EIF4E and EIF4G1/EIF4G3. EIF4E is also known to interact with other partners. Interacts with EIF4ENIF1/4E-T; promotes recruitment to P-bodies and import into the nucleus. Hypophosphorylated EIF4EBP1, EIF4EBP2 and EIF4EBP3 compete with EIF4G1/EIF4G3 to interact with EIF4E; insulin stimulated MAP-kinase (MAPK1 and MAPK3) phosphorylation of EIF4EBP1 causes dissociation of the complex allowing EIF4G1/EIF4G3 to bind and consequent initiation of translation. Interacts mutually exclusive with EIF4A1 or EIF4A2. Interacts with NGDN and PIWIL2. Component of the CYFIP1-EIF4E-FMR1 complex composed of CYFIP, EIF4E and FMR1. Interacts directly with CYFIP1. Interacts with CLOCK. Binds to MKNK2 in nucleus. Interacts with LIMD1, WTIP and AJUBA. Interacts with APOBEC3G in an RNA-dependent manner. Interacts with LARP1. Interacts with METTL3. Interacts with RBM24; this interaction prevents EIF4E from binding to p53/TP53 mRNA and inhibits the assembly of translation initiation complex. Interacts with DDX3X; interaction is direct and in an RNA-independent manner; this interaction enhances EIF4E cap-binding ability and is required for the repression of cap-dependent translation and the increase of IRES-mediated translation. DDX3X competes with EIF4G1 for interaction with EIF4E. Interacts with EIF4G1; which in a mutual exclusive interaction associates either with EIF1 or with EIF4E on a common binding site. Interacts with BTG4 and CNOT7. Interacts with LRPPRC (via N-terminus); the interaction promotes association of EIF4E with 4ESE-containing mRNAs. Interacts with mRNA cleavage enzyme CPSF3 and its cofactor CPSF1. Interacts (via RING-type zinc finger) with PML; the interaction results in conformational changes of both interacting proteins and reduces EIF4E affinity for the 5' m7G cap of mRNA, thus reducing EIF4E-mediated mRNA nuclear export. Interacts with homeobox protein HHEX/PRH; the interaction inhibits EIF4E-mediated mRNA nuclear export. Interacts with homeobox protein HOXA9; the interaction positively regulates EIF4E-mediated mRNA nuclear export. Interacts with homeobox protein EMX2. (Microbial infection) Interacts with Lassa virus Z protein. As to quaternary structure, (Microbial infection) Interacts with Lymphocytic choriomeningitis virus (LCMV) Z protein (via RING-type zinc finger); the interaction results in conformational changes of both interacting proteins and reduces EIF4E affinity for the m7G mRNA cap structure. In terms of assembly, (Microbial infection) Interacts (via cap-binding region) with potato virus Y VPg; this interaction mediates the translation of the VPg-viral RNA conjugates and interferes with the cellular EIF4E-dependent mRNA export and translation. In terms of processing, phosphorylation increases the ability of the protein to bind to mRNA caps and to form the eIF4F complex. Phosphorylation also enhances its mRNA transport function. Phosphorylation at Ser-209 is not essential for protein synthesis.

It is found in the cytoplasm. The protein resides in the P-body. It localises to the stress granule. The protein localises to the nucleus. Its subcellular location is the nucleus speckle. It is found in the nuclear body. Acts in the cytoplasm to initiate and regulate protein synthesis and is required in the nucleus for export of a subset of mRNAs from the nucleus to the cytoplasm which promotes processes such as RNA capping, processing and splicing. Component of the protein complex eIF4F, which is involved in the recognition of the mRNA cap, ATP-dependent unwinding of 5'-terminal secondary structure and recruitment of mRNA to the ribosome. This protein recognizes and binds the 7-methylguanosine (m7G)-containing mRNA cap during an early step in the initiation of protein synthesis and facilitates ribosome binding by inducing the unwinding of the mRNAs secondary structures. Together with EIF4G1, antagonizes the scanning promoted by EIF1-EIF4G1 and is required for TISU translation, a process where the TISU element recognition makes scanning unnecessary. In addition to its role in translation initiation, also acts as a regulator of translation and stability in the cytoplasm. Component of the CYFIP1-EIF4E-FMR1 complex which binds to the mRNA cap and mediates translational repression: in the complex, EIF4E mediates the binding to the mRNA cap. Component of a multiprotein complex that sequesters and represses translation of proneurogenic factors during neurogenesis. In P-bodies, component of a complex that mediates the storage of translationally inactive mRNAs in the cytoplasm and prevents their degradation. May play an important role in spermatogenesis through translational regulation of stage-specific mRNAs during germ cell development. As well as its roles in translation, also involved in mRNA nucleocytoplasmic transport. Its role in mRNA export from the nucleus to the cytoplasm relies on its ability to bind the m7G cap of RNAs and on the presence of the 50-nucleotide EIF4E sensitivity element (4ESE) in the 3'UTR of sensitive transcripts. Interaction with the 4ESE is mediated by LRPPRC which binds simultaneously to both EIF4E and the 4ESE, thereby acting as a platform for assembly for the RNA export complex. EIF4E-dependent mRNA export is independent of ongoing protein or RNA synthesis and is also NFX1-independent but is XPO1-dependent with LRPPRC interacting with XPO1 to form an EIF4E-dependent mRNA export complex. Alters the composition of the cytoplasmic face of the nuclear pore to promote RNA export by reducing RANBP2 expression, relocalizing nucleoporin NUP214 and increasing expression of RANBP1 and RNA export factors DDX19 and GLE1. Promotes the nuclear export of cyclin CCND1 mRNA. Promotes the nuclear export of NOS2/iNOS mRNA. Promotes the nuclear export of MDM2 mRNA. Promotes the export of additional mRNAs, including others involved in the cell cycle. In the nucleus, binds to capped splice factor-encoding mRNAs and stimulates their nuclear export to enhance splice factor production by increasing their cytoplasmic availability to the translation machinery. May also regulate splicing through interaction with the spliceosome in an RNA and m7G cap-dependent manner. Also binds to some pre-mRNAs and may play a role in their recruitment to the spliceosome. Promotes steady-state capping of a subset of coding and non-coding RNAs by mediating nuclear export of capping machinery mRNAs including RNMT, RNGTT and RAMAC to enhance their translation. Stimulates mRNA 3'-end processing by promoting the expression of several core cleavage complex factors required for mRNA cleavage and polyadenylation, and may also have a direct effect through its interaction with the CPSF3 cleavage enzyme. Rescues cells from apoptosis by promoting activation of serine/threonine-protein kinase AKT1 through mRNA export of NBS1 which potentiates AKT1 phosphorylation and also through mRNA export of AKT1 effectors, allowing for increased production of these proteins. This is Eukaryotic translation initiation factor 4E from Homo sapiens (Human).